A 277-amino-acid polypeptide reads, in one-letter code: Urease accessory protein UreD (277 aa).

Belongs to the UreD family. As to quaternary structure, ureD, UreF and UreG form a complex that acts as a GTP-hydrolysis-dependent molecular chaperone, activating the urease apoprotein by helping to assemble the nickel containing metallocenter of UreC. The UreE protein probably delivers the nickel.

The protein localises to the cytoplasm. Required for maturation of urease via the functional incorporation of the urease nickel metallocenter. The chain is Urease accessory protein UreD from Yersinia pestis (strain Pestoides F).